The chain runs to 60 residues: Large ribosomal subunit protein uL30 (60 aa).

The protein belongs to the universal ribosomal protein uL30 family. As to quaternary structure, part of the 50S ribosomal subunit.

The sequence is that of Large ribosomal subunit protein uL30 from Limosilactobacillus fermentum (strain NBRC 3956 / LMG 18251) (Lactobacillus fermentum).